The sequence spans 394 residues: MGMKHSSRCLLLRRKMAENAAESTEVNSPPSQPPQPVVPAKPVQCVHHVSTQPSCPGRGKMSKLLNPEEMTSRDYYFDSYAHFGIHEEMLKDEVRTLTYRNSMYHNKHVFKDKVVLDVGSGTGILSMFAAKAGAKKVFGIECSSISDYSEKIIKANHLDNIITIFKGKVEEVELPVEKVDIIISEWMGYCLFYESMLNTVIFARDKWLKPGGLMFPDRAALYVVAIEDRQYKDFKIHWWENVYGFDMTCIRDVAMKEPLVDIVDPKQVVTNACLIKEVDIYTVKTEELSFTSAFCLQIQRNDYVHALVTYFNIEFTKCHKKMGFSTAPDAPYTHWKQTVFYLEDYLTVRRGEEIYGTISMKPNAKNVRDLDFTVDLDFKGQLCETSVSNDYKMR.

Gly2 carries the N-myristoyl glycine lipid modification. A disordered region spans residues 16-40 (MAENAAESTEVNSPPSQPPQPVVPA). 2 consecutive short sequence motifs (SH3-binding) follow at residues 29 to 42 (PPSQ…PAKP) and 53 to 58 (PSCPGR). The span at 30–39 (PSQPPQPVVP) shows a compositional bias: pro residues. Arg58 is subject to Omega-N-methylarginine; by autocatalysis. The residue at position 73 (Arg73) is an Asymmetric dimethylarginine; by autocatalysis. The region spanning 73 to 394 (RDYYFDSYAH…TSVSNDYKMR (322 aa)) is the SAM-dependent MTase PRMT-type domain. Residues His86, Arg95, Gly119, 119 to 122 (GSGT), Glu141, and Glu170 contribute to the S-adenosyl-L-methionine site. Residues Glu185 and Glu194 contribute to the active site.

This sequence belongs to the class I-like SAM-binding methyltransferase superfamily. Protein arginine N-methyltransferase family. PRMT8 subfamily. As to quaternary structure, homodimer. Tetramer; individual homodimers associates to form a homotetramer. Homooctamer; individual homodimers associates to form a homooctamer and homooligomerization is required for proper localization to the cell membrane. Heterodimer with PRMT1; heterodimerization may recruit PRMT1 activity to the plasma membrane. Interacts with PRMT2 (via the SH3 domain). Interacts with FYN (via the SH3 domain). Interacts with EWS; independently of EWS methylation status. In terms of tissue distribution, brain-specific.

Its subcellular location is the cell membrane. It catalyses the reaction L-arginyl-[protein] + S-adenosyl-L-methionine = N(omega)-methyl-L-arginyl-[protein] + S-adenosyl-L-homocysteine + H(+). It carries out the reaction L-arginyl-[protein] + 2 S-adenosyl-L-methionine = N(omega),N(omega)-dimethyl-L-arginyl-[protein] + 2 S-adenosyl-L-homocysteine + 2 H(+). In terms of biological role, S-adenosyl-L-methionine-dependent and membrane-associated arginine methyltransferase that can both catalyze the formation of omega-N monomethylarginine (MMA) and asymmetrical dimethylarginine (aDMA) in proteins such as NIFK, myelin basic protein, histone H4, H2A and H2A/H2B dimer. Able to mono- and dimethylate EWS protein; however its precise role toward EWS remains unclear as it still interacts with fully methylated EWS. The polypeptide is Protein arginine N-methyltransferase 8 (Homo sapiens (Human)).